We begin with the raw amino-acid sequence, 402 residues long: Heat stress transcription factor A-6a (402 aa).

The interval 1–28 is disordered; the sequence is MLKPQTPRARRAAHPNSHMASSSSSSSL. Residues 212 to 258 are a coiled coil; sequence EVVSLKRDRAALRAEVIMLKQQYNACKSQLIAMEEMVRNIERRQQQT. Positions 216 to 266 are hydrophobic repeat HR-A/B; that stretch reads LKRDRAALRAEVIMLKQQYNACKSQLIAMEEMVRNIERRQQQTIGFFAKVL. A Nuclear localization signal motif is present at residues 290 to 293; the sequence is KRQR. The AHA signature appears at 349-358; that stretch reads DDVWEELDAL.

This sequence belongs to the HSF family. Class A subfamily. Homotrimer. Post-translationally, exhibits temperature-dependent phosphorylation.

The protein resides in the nucleus. Functionally, transcriptional regulator that specifically binds DNA of heat shock promoter elements (HSE). This is Heat stress transcription factor A-6a (HSFA6B) from Oryza sativa subsp. japonica (Rice).